Reading from the N-terminus, the 402-residue chain is Multidrug resistance protein MdtH (402 aa).

The Cytoplasmic segment spans residues 1 to 12 (MSRVSQARNLGK). Residues 13–33 (YFLLIDNMLVVLGFFVVFPLI) form a helical membrane-spanning segment. Residues 34–98 (SIRFVDQMGW…GFATMGIAHE (65 aa)) are Periplasmic-facing. Residues 99–116 (PWLLWFSCLLSGLGGTLF) traverse the membrane as a helical segment. The Cytoplasmic segment spans residues 117–138 (DPPRSALVVKLIRPQQRGRFFS). A helical membrane pass occupies residues 139–159 (LLMMQDSAGAVIGALLGSWLL). At 160–164 (QYDFR) the chain is on the periplasmic side. The helical transmembrane segment at 165–185 (LVCATGAVLFVLCAAFNAWLL) threads the bilayer. The Cytoplasmic portion of the chain corresponds to 186-213 (PAWKLSTVRTPVREGMTRVMRDKRFVTY). Residues 214 to 234 (VLTLAGYYMLAVQVMLMLPIM) form a helical membrane-spanning segment. Topologically, residues 235–243 (VNDVAGAPS) are periplasmic. A helical transmembrane segment spans residues 244–264 (AVKWMYAIEACLSLTLLYPIA). At 265-276 (RWSEKHFRLEHR) the chain is on the cytoplasmic side. The helical transmembrane segment at 277 to 297 (LMAGLLIMSLSMMPVGMVSGL) threads the bilayer. Topologically, residues 298-299 (QQ) are periplasmic. The chain crosses the membrane as a helical span at residues 300-320 (LFNLICLFYIGSIIAEPARET). Residues 321-339 (LSASLADARARGSYMGFSR) are Cytoplasmic-facing. A helical transmembrane segment spans residues 340-360 (LGLAIGGAIGYIGGGWLFDLG). The Periplasmic segment spans residues 361–367 (KSAHQPE). A helical membrane pass occupies residues 368 to 388 (LPWMMLGIIGIFTFLALGWQF). At 389-402 (SQKRAARRLLERDA) the chain is on the cytoplasmic side.

The protein belongs to the major facilitator superfamily. DHA1 family. MdtH (TC 2.A.1.2.21) subfamily.

It is found in the cell inner membrane. In terms of biological role, confers resistance to norfloxacin and enoxacin. The chain is Multidrug resistance protein MdtH from Escherichia coli O9:H4 (strain HS).